Consider the following 578-residue polypeptide: Protein LIKE EARLY STARVATION, chloroplastic (578 aa).

The N-terminal 56 residues, 1 to 56 (MALRLGVSIGAALGSSHWDDGQRVRQRDFSASVNFTAPVTSRRSLRGSRTGVRILR), are a transit peptide targeting the chloroplast. Disordered stretches follow at residues 146–166 (NNSG…TSEV) and 187–206 (SETS…TPPQ).

Belongs to the ESV1 family. As to expression, expressed ubiquitously.

The protein resides in the plastid. It is found in the chloroplast stroma. Binds preferentially to highly ordered alpha-glucans, such as starch and crystalline maltodextrins. Involved in the organization of the starch granule matrix, thus influencing starch turnover by modulating the accessibility of starch polymers to modifying and degrading enzymes involved in phosphorylation, hydrolyzes and synthesis, including starch synthases (SSI and SSIII), starch phosphorylases (PHS1), isoamylase, beta-amylase, glucan water dikinase (GWD) and phosphoglucan water dikinase (PWD). The protein is Protein LIKE EARLY STARVATION, chloroplastic of Arabidopsis thaliana (Mouse-ear cress).